Reading from the N-terminus, the 68-residue chain is Sec-independent protein translocase protein TatA (68 aa).

The chain crosses the membrane as a helical span at residues 1–21; sequence MGSFSIWHWLIVLAVVLLLFG. The tract at residues 48-68 is disordered; it reads AAAADKSIDGKTVDHKSDEVR. Basic and acidic residues predominate over residues 53–68; it reads KSIDGKTVDHKSDEVR.

This sequence belongs to the TatA/E family. The Tat system comprises two distinct complexes: a TatABC complex, containing multiple copies of TatA, TatB and TatC subunits, and a separate TatA complex, containing only TatA subunits. Substrates initially bind to the TatABC complex, which probably triggers association of the separate TatA complex to form the active translocon.

The protein resides in the cell inner membrane. Its function is as follows. Part of the twin-arginine translocation (Tat) system that transports large folded proteins containing a characteristic twin-arginine motif in their signal peptide across membranes. TatA could form the protein-conducting channel of the Tat system. This is Sec-independent protein translocase protein TatA from Sinorhizobium medicae (strain WSM419) (Ensifer medicae).